The sequence spans 882 residues: Translation initiation factor IF-2 (882 aa).

Residues 28–294 (GIRKSADDSV…SSLQQGFQKP (267 aa)) are disordered. Positions 67–81 (STLNIPGTGGKSKSV) are enriched in polar residues. Over residues 92 to 209 (VKRDPQEAER…RMAEENKWTD (118 aa)) the composition is skewed to basic and acidic residues. Residues 244-258 (GRGRNAKAARPKKGN) are compositionally biased toward basic residues. Basic and acidic residues predominate over residues 259 to 272 (KHAESKADREEARA). Residues 381 to 550 (PRAPVVTIMG…LLQAEVLELK (170 aa)) form the tr-type G domain. The G1 stretch occupies residues 390–397 (GHVDHGKT). 390–397 (GHVDHGKT) is a GTP binding site. A G2 region spans residues 415-419 (GITQH). A G3 region spans residues 436–439 (DTPG). Residues 436 to 440 (DTPGH) and 490 to 493 (NKID) contribute to the GTP site. A G4 region spans residues 490–493 (NKID). The G5 stretch occupies residues 526–528 (SAK). Lys-800 carries the N6-acetyllysine modification.

This sequence belongs to the TRAFAC class translation factor GTPase superfamily. Classic translation factor GTPase family. IF-2 subfamily.

The protein localises to the cytoplasm. Its function is as follows. One of the essential components for the initiation of protein synthesis. Protects formylmethionyl-tRNA from spontaneous hydrolysis and promotes its binding to the 30S ribosomal subunits. Also involved in the hydrolysis of GTP during the formation of the 70S ribosomal complex. This chain is Translation initiation factor IF-2, found in Shigella flexneri serotype 5b (strain 8401).